Reading from the N-terminus, the 288-residue chain is Probable ketoamine kinase VV1_2562 (288 aa).

92–94 serves as a coordination point for ATP; that stretch reads NFL. Residue aspartate 195 is the Proton acceptor of the active site.

It belongs to the fructosamine kinase family.

Ketoamine kinase that phosphorylates ketoamines on the third carbon of the sugar moiety to generate ketoamine 3-phosphate. The polypeptide is Probable ketoamine kinase VV1_2562 (Vibrio vulnificus (strain CMCP6)).